The following is a 286-amino-acid chain: MAGAKEIKTKIASVQNTQKITSAMEMVAASKMRKAQDRMAASRPYAENMRKVIGHVAQGSLEYKHPYLEVREAKRVGYIVVSTDRGLCGGLNVNLFKKVVADVKKQREAGAEVEFCPIGARSVQFFNSFGGKVSAHASGLGDAPKLADLIGTVRVMLKAYNEGTLDRLYVVFNKFVNTMSQTPVIEQLLPLPKSEEDEISHHWDYLYEPDPKELLETLLVRYVESQVYQGVVENIASEQAARMVAMKAATDNAGELIDDLQLVYNKARQAAITQELSEIVSGAAAV.

Belongs to the ATPase gamma chain family. In terms of assembly, F-type ATPases have 2 components, CF(1) - the catalytic core - and CF(0) - the membrane proton channel. CF(1) has five subunits: alpha(3), beta(3), gamma(1), delta(1), epsilon(1). CF(0) has three main subunits: a, b and c.

It localises to the cell inner membrane. Produces ATP from ADP in the presence of a proton gradient across the membrane. The gamma chain is believed to be important in regulating ATPase activity and the flow of protons through the CF(0) complex. This chain is ATP synthase gamma chain, found in Shewanella loihica (strain ATCC BAA-1088 / PV-4).